Consider the following 96-residue polypeptide: Class I hydrophobin 2 (96 aa).

The first 15 residues, Met1 to Ala15, serve as a signal peptide directing secretion. Cystine bridges form between Cys28-Cys77, Cys34-Cys71, Cys35-Cys55, and Cys78-Cys91.

This sequence belongs to the fungal hydrophobin family.

The protein resides in the secreted. It localises to the cell wall. Aerial growth, conidiation, and dispersal of filamentous fungi in the environment rely upon a capability of their secreting small amphipathic proteins called hydrophobins (HPBs) with low sequence identity. Class I can self-assemble into an outermost layer of rodlet bundles on aerial cell surfaces, conferring cellular hydrophobicity that supports fungal growth, development and dispersal; whereas Class II form highly ordered films at water-air interfaces through intermolecular interactions but contribute nothing to the rodlet structure. Hyd2 plays a neglectable role in hyphal growth and asexual development and does not seem involved in cellular hydrophobicity, conidial adhesion, stress tolerance nor insect pathogenicity. The polypeptide is Class I hydrophobin 2 (Metarhizium robertsii (strain ARSEF 23 / ATCC MYA-3075) (Metarhizium anisopliae (strain ARSEF 23))).